Here is a 669-residue protein sequence, read N- to C-terminus: MPAKPVNPDLQKERSTATFNPREFSVLWAGGEERFKEKKALEKLFLEDPALQDDLPISYLSHKELYEHSLRKACIIGEKIRKLRADGEDGVDTYNALLGGSLGSAILKEGNPLALHYVMFVPTIMGQGTMDQQVEWLSKAWDCEIIGTYAQTELGHGTFLRGLETRADYDASTQEFVINTPSLSAYKWWPGGLGHTANHAVVVAQLYTKGEFRGLAPFIVQLRDSDTHRPMPGIDIGDIGTKLGMKGVNNGYLGLKNVRVPLNNMLMKNQQVLPDGTYVAPKNSVLTYGTMMFVRCALIRDTAQSLAKASTIATRYSAVRRQSPIDPNQPEPQIMDHTTQQLKLFPQIAKAIVFKTTGDGIWNMYNVISGEIEQGNLDRLPEMHALSCCLKAICSADAAAGVETCRLSCGGHGYMDCSNFPTIYGMTTAVCTYEGENTVMLLQTARYLVKVYGQALNGEKLVPTVSYISDAINQTKFVNFDGSLRSIVKAFQFVAANKTRIAYEQIELRRKQGYGTEVAANLCGTFLTAAADLHGRAFLAQTAYTELLALSREVSPELAEVLKVVLELYLVDACLNRIGDFLRFIDLTDQDVTKLEVRLENCLKRFRPNAVSLVDSFDLHDRVLDSALGAYDGNVYEHIFESTKKNPLNKEPVNGAFHKYLKPFMKAHL.

2 residues coordinate FAD: Thr-152 and Gly-191. Glu-434 serves as the catalytic Proton acceptor. Tyr-544 carries the post-translational modification Phosphotyrosine. Ser-551 carries the post-translational modification Phosphoserine. A Microbody targeting signal motif is present at residues 667-669 (AHL).

Belongs to the acyl-CoA oxidase family. As to quaternary structure, homodimer. It depends on FAD as a cofactor. As to expression, expressed in glia.

It is found in the peroxisome. Its subcellular location is the nucleus. The enzyme catalyses a 2,3-saturated acyl-CoA + O2 = a (2E)-enoyl-CoA + H2O2. It participates in lipid metabolism; peroxisomal fatty acid beta-oxidation. In terms of biological role, catalyzes the desaturation of acyl-CoAs to 2-trans-enoyl-CoAs. First enzyme of the fatty acid beta-oxidation pathway. This is Acyl-coenzyme A oxidase 1 from Drosophila melanogaster (Fruit fly).